The sequence spans 273 residues: Dermonecrotic toxin LapSicTox-alphaIB1bi (273 aa).

His5 is a catalytic residue. Glu25 and Asp27 together coordinate Mg(2+). His41 acts as the Nucleophile in catalysis. Disulfide bonds link Cys45–Cys51 and Cys47–Cys190. Mg(2+) is bound at residue Asp85. Residues Asn189 and Asn250 are each glycosylated (N-linked (GlcNAc...) asparagine).

The protein belongs to the arthropod phospholipase D family. Class II subfamily. Mg(2+) is required as a cofactor. In terms of tissue distribution, expressed by the venom gland.

Its subcellular location is the secreted. It carries out the reaction an N-(acyl)-sphingosylphosphocholine = an N-(acyl)-sphingosyl-1,3-cyclic phosphate + choline. The enzyme catalyses an N-(acyl)-sphingosylphosphoethanolamine = an N-(acyl)-sphingosyl-1,3-cyclic phosphate + ethanolamine. The catalysed reaction is a 1-acyl-sn-glycero-3-phosphocholine = a 1-acyl-sn-glycero-2,3-cyclic phosphate + choline. It catalyses the reaction a 1-acyl-sn-glycero-3-phosphoethanolamine = a 1-acyl-sn-glycero-2,3-cyclic phosphate + ethanolamine. In terms of biological role, dermonecrotic toxins cleave the phosphodiester linkage between the phosphate and headgroup of certain phospholipids (sphingolipid and lysolipid substrates), forming an alcohol (often choline) and a cyclic phosphate. This toxin acts on sphingomyelin (SM). It may also act on ceramide phosphoethanolamine (CPE), lysophosphatidylcholine (LPC) and lysophosphatidylethanolamine (LPE), but not on lysophosphatidylserine (LPS), and lysophosphatidylglycerol (LPG). It acts by transphosphatidylation, releasing exclusively cyclic phosphate products as second products. Induces dermonecrosis, hemolysis, increased vascular permeability, edema, inflammatory response, and platelet aggregation. The polypeptide is Dermonecrotic toxin LapSicTox-alphaIB1bi (Loxosceles apachea (Apache recluse spider)).